We begin with the raw amino-acid sequence, 185 residues long: Peptide deformylase (185 aa).

Positions 94 and 136 each coordinate Fe cation. Residue Glu137 is part of the active site. Residue His140 participates in Fe cation binding.

It belongs to the polypeptide deformylase family. Fe(2+) is required as a cofactor.

The enzyme catalyses N-terminal N-formyl-L-methionyl-[peptide] + H2O = N-terminal L-methionyl-[peptide] + formate. Functionally, removes the formyl group from the N-terminal Met of newly synthesized proteins. Requires at least a dipeptide for an efficient rate of reaction. N-terminal L-methionine is a prerequisite for activity but the enzyme has broad specificity at other positions. The sequence is that of Peptide deformylase from Chlorobium limicola (strain DSM 245 / NBRC 103803 / 6330).